A 342-amino-acid chain; its full sequence is MAAVALMPPPLLLLLLLASPPAASAPSARDPFAPQLGDTQNCQLRCRDRDLGPQPSQAGLEGASESPYDRAVLISACERGCRLFSICRFVARSSKPNATQTECEAACVEAYVKEAEQQACSHGCWSQPAEPEPEQKRKVLEAPSGALSLLDLFSTLCNDLVNSAQGFVSSTWTYYLQTDNGKVVVFQTQPIVESLGFQGGRLQRVEVTWRGSHPEALEVHVDPVGPLDKVRKAKIRVKTSSKAKVESEEPQDNDFLSCMSRRSGLPRWILACCLFLSVLVMLWLSCSTLVTAPGQHLKFQPLTLEQHKGFMMEPDWPLYPPPSHACEDSLPPYKLKLDLTKL.

Positions 1–24 (MAAVALMPPPLLLLLLLASPPAAS) are cleaved as a signal peptide. A glycan (N-linked (GlcNAc...) asparagine) is linked at Asn-97. Residues 268 to 290 (WILACCLFLSVLVMLWLSCSTLV) form a helical membrane-spanning segment. The Microbody targeting signal motif lies at 340-342 (TKL).

It belongs to the TMEM59 family. As to expression, expressed preferentially at high level in the brain.

Its subcellular location is the golgi apparatus membrane. Functionally, modulates the O-glycosylation and complex N-glycosylation steps occurring during the Golgi maturation of APP. Inhibits APP transport to the cell surface and further shedding. The chain is Transmembrane protein 59-like (TMEM59L) from Homo sapiens (Human).